Here is a 739-residue protein sequence, read N- to C-terminus: Catalase-peroxidase 1 (739 aa).

Residues 1-33 form a disordered region; the sequence is MPEDRPIEDSPPIGEAQTDAPAGGCPAGFGRIK. A cross-link (tryptophyl-tyrosyl-methioninium (Trp-Tyr) (with M-262)) is located at residues 113 to 236; that stretch reads WHAAGTYRVS…LAAVQMGLIY (124 aa). The active-site Proton acceptor is His-114. The tryptophyl-tyrosyl-methioninium (Tyr-Met) (with W-113) cross-link spans 236–262; that stretch reads YVNPEGPNGNPDPQASAIDIRETFGRM. His-277 lines the heme b pocket.

This sequence belongs to the peroxidase family. Peroxidase/catalase subfamily. Homodimer or homotetramer. It depends on heme b as a cofactor. In terms of processing, formation of the three residue Trp-Tyr-Met cross-link is important for the catalase, but not the peroxidase activity of the enzyme.

The catalysed reaction is H2O2 + AH2 = A + 2 H2O. It carries out the reaction 2 H2O2 = O2 + 2 H2O. Its function is as follows. Bifunctional enzyme with both catalase and broad-spectrum peroxidase activity. May play a role in the intracellular survival of mycobacteria. This Mycolicibacterium smegmatis (strain ATCC 700084 / mc(2)155) (Mycobacterium smegmatis) protein is Catalase-peroxidase 1.